Here is a 294-residue protein sequence, read N- to C-terminus: tRNA dimethylallyltransferase (294 aa).

7–14 lines the ATP pocket; the sequence is GPTGSGKS. Position 9–14 (9–14) interacts with substrate; that stretch reads TGSGKS.

The protein belongs to the IPP transferase family. Monomer. Requires Mg(2+) as cofactor.

It catalyses the reaction adenosine(37) in tRNA + dimethylallyl diphosphate = N(6)-dimethylallyladenosine(37) in tRNA + diphosphate. Its function is as follows. Catalyzes the transfer of a dimethylallyl group onto the adenine at position 37 in tRNAs that read codons beginning with uridine, leading to the formation of N6-(dimethylallyl)adenosine (i(6)A). This chain is tRNA dimethylallyltransferase, found in Akkermansia muciniphila (strain ATCC BAA-835 / DSM 22959 / JCM 33894 / BCRC 81048 / CCUG 64013 / CIP 107961 / Muc).